The following is a 392-amino-acid chain: tRNA (guanine(26)-N(2)/guanine(27)-N(2))-dimethyltransferase (392 aa).

The Trm1 methyltransferase domain maps to 2–375 (EIVQEGIAKI…LSFEEVMKKM (374 aa)). S-adenosyl-L-methionine-binding residues include Arg-36, Arg-66, Asp-84, Glu-113, and Ala-114. Residues Cys-247, Cys-250, Cys-266, and Cys-269 each coordinate Zn(2+).

Belongs to the class I-like SAM-binding methyltransferase superfamily. Trm1 family.

It catalyses the reaction guanosine(26)/guanosine(27) in tRNA + 4 S-adenosyl-L-methionine = N(2)-dimethylguanosine(26)/N(2)-dimethylguanosine(27) in tRNA + 4 S-adenosyl-L-homocysteine + 4 H(+). Dimethylates the guanine residues at position 26 and 27 of one or more tRNAs using S-adenosyl-L-methionine as donor of the methyl groups. In Aquifex aeolicus (strain VF5), this protein is tRNA (guanine(26)-N(2)/guanine(27)-N(2))-dimethyltransferase.